The primary structure comprises 224 residues: Ribose-5-phosphate isomerase A (224 aa).

Substrate-binding positions include 26–29, 82–85, and 95–98; these read TGST, DGAD, and KGGG. Residue Glu-104 is the Proton acceptor of the active site. Residue Lys-122 participates in substrate binding.

The protein belongs to the ribose 5-phosphate isomerase family. In terms of assembly, homodimer.

The catalysed reaction is aldehydo-D-ribose 5-phosphate = D-ribulose 5-phosphate. The protein operates within carbohydrate degradation; pentose phosphate pathway; D-ribose 5-phosphate from D-ribulose 5-phosphate (non-oxidative stage): step 1/1. Functionally, catalyzes the reversible conversion of ribose-5-phosphate to ribulose 5-phosphate. The sequence is that of Ribose-5-phosphate isomerase A from Lactococcus lactis subsp. cremoris (strain MG1363).